The chain runs to 745 residues: MASVLGSGRGSGGLSSQLKCKSKRRRRRRSKRKDKVSILSTFLAPFKYLSPGTTNTEDEDNLSTSSAEVKENRNVSNLGTRPLPPGDWARGSTPSVKRKRPLEEGNGGHFCKLQLIWKKLSWSVTPKNALVQLHELKPGLQYRMVSQTGPVHAPVFAVAVEVNGLTFEGTGPTKKKAKMRAAEMALKSFVQFPNAFQAHLAMGSSTSPCTDFTSDQADFPDTLFKEFEPSSKNEDFPGCHPVDTEFLSSAYRRGRLLYHTLDLMGQALPDRSRLAPGALGERNPVVVLNELRSGLRYVCLSETAEKPRVKSFVMAVCVDGRTFEGSGRSKKLAKGQAAQAALQALFDIRLPGHIPSRSKSNLLPQDFADSVSQLVTQKFRELTVGLTSVYARHKTLAGIVMTKGLDTKQAQVIVLSSGTKCISGEHISDQGLVVNDCHAEIVARRAFLHFLYSQLELHLSKHQEDPERSIFIRLKEGGYRLRENILFHLYVSTSPCGDARVNSPYEITTDLNSSKHIVRKFRGHLRTKIESGEGTVPVRGPSAVQTWDGILLGEQLITMSCTDKIASWNVLGLQGALLCHFIEPVYLHSIIVGSLHHTGHLARVMSHRMEGIGQLPASYRQNRPLLSGVSHAEARQPGKSPHFSANWVVGSADLEIINATTGKRSCGGSSRLCKHVFSAWWARLHGRLSTRIPSHGDTPSMYCEAKQGAHTYQSVKQQLFKAFQKAGLGTWVRKPPEQDQFLLSL.

Disordered regions lie at residues Met1–Lys35 and Ser50–Glu104. The span at Cys20 to Asp34 shows a compositional bias: basic residues. An R-domain (ssRNA-binding) region spans residues Lys23–Lys35. 2 DRBM domains span residues Thr125 to Gln191 and Asn283 to Asp347. The A to I editase domain maps to Val414–Phe741. His438 is a Zn(2+) binding site. Residue Glu440 is the Proton donor of the active site. Zn(2+) contacts are provided by Cys496 and Cys561.

Brain specific.

It localises to the nucleus. Lacks editing activity. It prevents the binding of other ADAR enzymes to targets in vitro, and decreases the efficiency of these enzymes. Capable of binding to dsRNA but also to ssRNA. The protein is Double-stranded RNA-specific editase B2 (Adarb2) of Mus musculus (Mouse).